The following is a 174-amino-acid chain: Shikimate kinase 2 (174 aa).

ATP is bound at residue 12–17 (GCGKTT). Mg(2+) contacts are provided by T16 and D32. D34, R58, and G79 together coordinate substrate. The segment at 112–126 (QAAPEEDLRPTLTGK) is LID domain. R120 serves as a coordination point for ATP. R139 serves as a coordination point for substrate.

Belongs to the shikimate kinase family. AroL subfamily. As to quaternary structure, monomer. It depends on Mg(2+) as a cofactor.

Its subcellular location is the cytoplasm. The catalysed reaction is shikimate + ATP = 3-phosphoshikimate + ADP + H(+). Its pathway is metabolic intermediate biosynthesis; chorismate biosynthesis; chorismate from D-erythrose 4-phosphate and phosphoenolpyruvate: step 5/7. Its function is as follows. Catalyzes the specific phosphorylation of the 3-hydroxyl group of shikimic acid using ATP as a cosubstrate. The sequence is that of Shikimate kinase 2 from Escherichia coli O81 (strain ED1a).